The chain runs to 308 residues: Phenylcoumaran benzylic ether reductase 1 (308 aa).

Residues 11 to 17 (GGTGYIG), Arg36, and Arg45 contribute to the NADP(+) site. Lys133 (proton acceptor) is an active-site residue. An NADP(+)-binding site is contributed by Arg137.

Belongs to the NmrA-type oxidoreductase family. Isoflavone reductase subfamily. In terms of tissue distribution, expressed in apical meristem and cotyledon veins of young seedlings. Expressed in vascular tissues of roots, leaves, stems and petals. Expressed in pollen grains. Expressed at low levels in cauline leaves and siliques.

It carries out the reaction (-)-dehydrodiconiferyl alcohol + NADPH + H(+) = (S)-isodihydrodehydrodiconiferyl alcohol + NADP(+). The catalysed reaction is (+)-dehydrodiconiferyl alcohol + NADPH + H(+) = (R)-isodihydrodehydrodiconiferyl alcohol + NADP(+). The enzyme catalyses (2R,3S)-dihydrodehydrodiconiferyl alcohol + NADPH + H(+) = (S)-tetrahydrodehydrodiconiferyl alcohol + NADP(+). It catalyses the reaction (2S,3R)-dihydrodehydrodiconiferyl alcohol + NADPH + H(+) = (R)-tetrahydrodehydrodiconiferyl alcohol + NADP(+). In terms of biological role, oxidoreductase involved in lignan biosynthesis. Catalyzes the NADPH-dependent reduction of phenylcoumaran benzylic ethers. Converts dehydrodiconiferyl alcohol (DDC) to isodihydrodehydrodiconiferyl alcohol (IDDDC), and dihydrodehydrodiconiferyl alcohol (DDDC) to tetrahydrodehydrodiconiferyl alcohol (TDDC). Plays an important role in the biosynthesis of secondary metabolites. In addition to the 8-5'-linked neolignan DDC, can reduce the 8-8'-linked lignans, pinoresinol, and lariciresinol, but with lower activities. This chain is Phenylcoumaran benzylic ether reductase 1, found in Arabidopsis thaliana (Mouse-ear cress).